Consider the following 250-residue polypeptide: UPF0014 membrane protein YjkA (250 aa).

The next 6 helical transmembrane spans lie at 3 to 23 (YLSLSLTMIFVLIALFLSKSF), 32 to 52 (IIATIRAAVQLLIIGYVLSLI), 57 to 77 (HPVFILLMVLLMLAVAAQNVI), 91 to 111 (FAALAIVEIVTQGILLSLHII), 117 to 137 (YVIPISGMVIGNSMVLSSLFL), and 214 to 234 (LLIVFTTMASAALTCVILSVL).

The protein belongs to the UPF0014 family.

Its subcellular location is the cell membrane. This is UPF0014 membrane protein YjkA (yjkA) from Bacillus subtilis (strain 168).